The following is a 492-amino-acid chain: 2-succinylbenzoate--CoA ligase (492 aa).

It belongs to the ATP-dependent AMP-binding enzyme family. MenE subfamily.

It carries out the reaction 2-succinylbenzoate + ATP + CoA = 2-succinylbenzoyl-CoA + AMP + diphosphate. It functions in the pathway quinol/quinone metabolism; 1,4-dihydroxy-2-naphthoate biosynthesis; 1,4-dihydroxy-2-naphthoate from chorismate: step 5/7. The protein operates within quinol/quinone metabolism; menaquinone biosynthesis. Converts 2-succinylbenzoate (OSB) to 2-succinylbenzoyl-CoA (OSB-CoA). The chain is 2-succinylbenzoate--CoA ligase from Geobacillus sp. (strain WCH70).